A 254-amino-acid polypeptide reads, in one-letter code: Pre-miRNA 5'-monophosphate methyltransferase (254 aa).

The Bin3-type SAM domain maps to 34–254 (ENRLSLIPEA…DRSLLLFRRQ (221 aa)). S-adenosyl-L-methionine is bound by residues arginine 36, asparagine 66, aspartate 99, and 124-125 (DI).

Belongs to the methyltransferase superfamily.

The protein resides in the cytoplasm. The enzyme catalyses a 5'-end 5'-phospho-ribonucleoside-RNA + S-adenosyl-L-methionine = a 5'-end (5'-methylphospho)-ribonucleoside-RNA + S-adenosyl-L-homocysteine. It carries out the reaction a 5'-end 5'-phospho-ribonucleoside-RNA + 2 S-adenosyl-L-methionine = a 5'-end (5'-bismethylphospho)-ribonucleoside-RNA + 2 S-adenosyl-L-homocysteine. O-methyltransferase that specifically monomethylates 5'-monophosphate of cytoplasmic histidyl tRNA (tRNA(His)), acting as a capping enzyme by protecting tRNA(His) from cleavage by DICER1. Also able, with less efficiently, to methylate the 5' monophosphate of a subset of pre-miRNAs, acting as a negative regulator of miRNA processing. The 5' monophosphate of pre-miRNAs is recognized by DICER1 and is required for pre-miRNAs processing: methylation at this position reduces the processing of pre-miRNAs by DICER1. Was also reported to mediate dimethylation of pre-miR-145; however dimethylation cannot be reproduced by another group which observes a monomethylation of pre-miR-145. This Danio rerio (Zebrafish) protein is Pre-miRNA 5'-monophosphate methyltransferase (bcdin3d).